Here is a 258-residue protein sequence, read N- to C-terminus: Type III pantothenate kinase (258 aa).

Residue 6 to 13 (DVGNTNTV) coordinates ATP. Substrate-binding positions include tyrosine 100 and 107-110 (GADR). Aspartate 109 acts as the Proton acceptor in catalysis. K(+) is bound at residue aspartate 129. Threonine 132 is a binding site for ATP. Threonine 184 serves as a coordination point for substrate.

Belongs to the type III pantothenate kinase family. Homodimer. NH4(+) serves as cofactor. K(+) is required as a cofactor.

It localises to the cytoplasm. The catalysed reaction is (R)-pantothenate + ATP = (R)-4'-phosphopantothenate + ADP + H(+). It participates in cofactor biosynthesis; coenzyme A biosynthesis; CoA from (R)-pantothenate: step 1/5. Its function is as follows. Catalyzes the phosphorylation of pantothenate (Pan), the first step in CoA biosynthesis. This is Type III pantothenate kinase from Geobacillus sp. (strain WCH70).